The chain runs to 322 residues: Replication factor C small subunit (322 aa).

Position 46-53 (46-53 (GSAGIGKT)) interacts with ATP.

The protein belongs to the activator 1 small subunits family. RfcS subfamily. As to quaternary structure, heteromultimer composed of small subunits (RfcS) and large subunits (RfcL).

Functionally, part of the RFC clamp loader complex which loads the PCNA sliding clamp onto DNA. This chain is Replication factor C small subunit, found in Methanoculleus marisnigri (strain ATCC 35101 / DSM 1498 / JR1).